A 301-amino-acid chain; its full sequence is Sulfate adenylyltransferase subunit 2 (301 aa).

The disordered stretch occupies residues 279–301 (RQGRLIDRDEAGSMEKKKREGYF).

It belongs to the PAPS reductase family. CysD subfamily. In terms of assembly, heterodimer composed of CysD, the smaller subunit, and CysN.

It catalyses the reaction sulfate + ATP + H(+) = adenosine 5'-phosphosulfate + diphosphate. Its pathway is sulfur metabolism; hydrogen sulfide biosynthesis; sulfite from sulfate: step 1/3. Its function is as follows. With CysN forms the ATP sulfurylase (ATPS) that catalyzes the adenylation of sulfate producing adenosine 5'-phosphosulfate (APS) and diphosphate, the first enzymatic step in sulfur assimilation pathway. APS synthesis involves the formation of a high-energy phosphoric-sulfuric acid anhydride bond driven by GTP hydrolysis by CysN coupled to ATP hydrolysis by CysD. The protein is Sulfate adenylyltransferase subunit 2 of Mesorhizobium japonicum (strain LMG 29417 / CECT 9101 / MAFF 303099) (Mesorhizobium loti (strain MAFF 303099)).